Here is a 354-residue protein sequence, read N- to C-terminus: Fructose-bisphosphate aldolase 2 (354 aa).

A D-glyceraldehyde 3-phosphate-binding site is contributed by serine 50. Aspartate 83 serves as the catalytic Proton donor. Residues histidine 84, aspartate 105, glutamate 142, and histidine 198 each contribute to the Zn(2+) site. Position 199 (glycine 199) interacts with dihydroxyacetone phosphate. Histidine 232 is a Zn(2+) binding site. Dihydroxyacetone phosphate-binding positions include 233–235 (GSS) and 275–278 (NIDT).

It belongs to the class II fructose-bisphosphate aldolase family. In terms of assembly, homodimer. Requires Zn(2+) as cofactor.

It carries out the reaction beta-D-fructose 1,6-bisphosphate = D-glyceraldehyde 3-phosphate + dihydroxyacetone phosphate. It functions in the pathway carbohydrate biosynthesis; Calvin cycle. Its pathway is carbohydrate degradation; glycolysis; D-glyceraldehyde 3-phosphate and glycerone phosphate from D-glucose: step 4/4. Its function is as follows. Catalyzes the aldol condensation of dihydroxyacetone phosphate (DHAP or glycerone-phosphate) with glyceraldehyde 3-phosphate (G3P) to form fructose 1,6-bisphosphate (FBP) in gluconeogenesis and the reverse reaction in glycolysis. This Cereibacter sphaeroides (Rhodobacter sphaeroides) protein is Fructose-bisphosphate aldolase 2 (cfxB).